We begin with the raw amino-acid sequence, 279 residues long: MLIIELLKALFLGVVEGVTEWLPVSSTGHLILVQEFMKLNQSKSFVEMFNIVIQLGAIMAVIVIYFKRLNPFQPGKSAREIRLTWQLWLKVVIACIPSILIALPFDNWFEAHFNFMIPIAIALIFYGFVFIWVEKRNAHLKPQVTELASMSYKTAFLIGCFQVLSIVPGTSRSGATILGAIIIGTSRSVAADFTFFLAIPTMFGYSGLKAVKYFLDGNVLSLDQSLILLVASLTAFVVSLYVIRFLTDYVKRHDFTIFGKYRIVLGSLLILYWLVVHLF.

The next 6 helical transmembrane spans lie at F45 to Y65, W85 to F105, F113 to V133, S188 to L208, L226 to L246, and F255 to V275.

The protein belongs to the UppP family.

The protein localises to the cell membrane. The enzyme catalyses di-trans,octa-cis-undecaprenyl diphosphate + H2O = di-trans,octa-cis-undecaprenyl phosphate + phosphate + H(+). Functionally, catalyzes the dephosphorylation of undecaprenyl diphosphate (UPP). Confers resistance to bacitracin. This is Undecaprenyl-diphosphatase from Streptococcus agalactiae serotype III (strain NEM316).